The chain runs to 38 residues: Large ribosomal subunit protein bL36 (38 aa).

It belongs to the bacterial ribosomal protein bL36 family.

The sequence is that of Large ribosomal subunit protein bL36 from Cupriavidus metallidurans (strain ATCC 43123 / DSM 2839 / NBRC 102507 / CH34) (Ralstonia metallidurans).